Here is a 700-residue protein sequence, read N- to C-terminus: MAQEVLTDLNKVRNIGIMAHIDAGKTTTTERILFYTGVNYKIGETHDGASTTDWMEQEKERGITITSAAVTCFWNNNQINIIDTPGHVDFTVEVERSLRVLDGAVAVFDGKEGVEPQSEQVWRQAAKYDVPRICFVNKMDKMGADFYFTVQTIIDRLGAKPLVLQLPIGAEDDFDGVVDLVEMKAVTWRGTVAIGAEPTIEEIPADLADKAAEYREKLLETVAESDEKLMEKYFAGEELSVEEIKGAIRKMTVNSELYPVLCGSAFKNKGVQPMLDAVIDYLPNPLDIGEVQGHALGNEEEILTRKPSKDEPFSALAFKIASHPFFGKLTFVRVYSGRIDPGAQVMNATKGKKERIGKLFQMHANKENPVDEAVAGHIYAMIGLKDTTTGDTLCAQDAPIVLESMSFPDPVIQVSIEPKTKSDQEKLGTAIQKLAEEDPTFSVELDEETGQTVIGGMGELHLDILVDRMRREFKVEANVGKPQVAYRETITKKVEKHDYTHKKQTGGSGQFAKVIIALEPFVGEDGATYEFENKVSGGRIPREYIPSVDAGAQDAMQYGVLAGYPLVNLKLSLLDGAYHDVDSSEMAFKVAGSQALKEAARKAGPVILEPLMAVEVTTPEEYMGDVIGDLNSRRGQIQAMEERSGARVVKALVPLSEMFGYIGDLRSKTQGRANFSMVFDSYAEVPANVSKEIIAKATGE.

In terms of domain architecture, tr-type G spans 10–286 (NKVRNIGIMA…AVIDYLPNPL (277 aa)). GTP is bound by residues 19–26 (AHIDAGKT), 83–87 (DTPGH), and 137–140 (NKMD).

The protein belongs to the TRAFAC class translation factor GTPase superfamily. Classic translation factor GTPase family. EF-G/EF-2 subfamily.

Its subcellular location is the cytoplasm. In terms of biological role, catalyzes the GTP-dependent ribosomal translocation step during translation elongation. During this step, the ribosome changes from the pre-translocational (PRE) to the post-translocational (POST) state as the newly formed A-site-bound peptidyl-tRNA and P-site-bound deacylated tRNA move to the P and E sites, respectively. Catalyzes the coordinated movement of the two tRNA molecules, the mRNA and conformational changes in the ribosome. The protein is Elongation factor G of Rhodococcus jostii (strain RHA1).